A 917-amino-acid polypeptide reads, in one-letter code: Probable dipeptidyl-aminopeptidase B (917 aa).

Residues methionine 1–tryptophan 75 are disordered. Residues methionine 1–glutamine 93 lie on the Cytoplasmic side of the membrane. A compositionally biased stretch (low complexity) spans aspartate 27–valine 39. The segment covering aspartate 40–proline 49 has biased composition (polar residues). Residues valine 57–aspartate 69 are compositionally biased toward basic and acidic residues. A helical; Signal-anchor for type II membrane protein membrane pass occupies residues isoleucine 94–phenylalanine 114. Topologically, residues valine 115–arginine 917 are vacuolar. Residues threonine 124–proline 133 are compositionally biased toward polar residues. Positions threonine 124–proline 150 are disordered. Asparagine 206, asparagine 302, and asparagine 354 each carry an N-linked (GlcNAc...) asparagine glycan. Serine 759 serves as the catalytic Charge relay system. Asparagine 818 carries N-linked (GlcNAc...) asparagine glycosylation. Active-site charge relay system residues include aspartate 836 and histidine 869.

It belongs to the peptidase S9B family.

The protein localises to the vacuole membrane. It catalyses the reaction Release of an N-terminal dipeptide, Xaa-Yaa-|-Zaa-, from a polypeptide, preferentially when Yaa is Pro, provided Zaa is neither Pro nor hydroxyproline.. Functionally, type IV dipeptidyl-peptidase which removes N-terminal dipeptides sequentially from polypeptides having unsubstituted N-termini provided that the penultimate residue is proline. This is Probable dipeptidyl-aminopeptidase B (DAPB) from Arthroderma gypseum (strain ATCC MYA-4604 / CBS 118893) (Microsporum gypseum).